A 692-amino-acid polypeptide reads, in one-letter code: Formate hydrogenlyase transcriptional activator (692 aa).

The 143-residue stretch at 202–344 folds into the GAF domain; the sequence is DIDELVSEVA…QIAERVAIAV (143 aa). The Sigma-54 factor interaction domain occupies 381-610; it reads IIGRSEAMYN…LENVVERAVL (230 aa). Residues 409 to 416 and 472 to 481 contribute to the ATP site; these read GETGTGKE and ADKSSLFLDE. The segment at residues 663-682 is a DNA-binding region (H-T-H motif); it reads PKGAAQRLGLKRTTLLSRMK.

Its function is as follows. Required for induction of expression of the formate dehydrogenase H and hydrogenase-3 structural genes. This Salmonella typhimurium (strain SL1344) protein is Formate hydrogenlyase transcriptional activator (fhlA).